The primary structure comprises 504 residues: GTPase Der (504 aa).

The 164-residue stretch at 3 to 166 (PVVALVGRPN…QVLAPLAEKL (164 aa)) folds into the EngA-type G 1 domain. GTP contacts are provided by residues 9 to 16 (GRPNVGKS), 56 to 60 (DTGGI), and 118 to 121 (NKTD). Positions 171–190 (VDSDENVADDEQDEWDSDFD) are disordered. The segment covering 172–190 (DSDENVADDEQDEWDSDFD) has biased composition (acidic residues). One can recognise an EngA-type G 2 domain in the interval 216–389 (IKIAIVGRPN…SIQEAYQCAT (174 aa)). GTP contacts are provided by residues 222–229 (GRPNVGKS), 269–273 (DTAGV), and 334–337 (NKWD). Residues 390-474 (KKMTTSMLTR…PIRVLFQEGN (85 aa)) enclose the KH-like domain.

It belongs to the TRAFAC class TrmE-Era-EngA-EngB-Septin-like GTPase superfamily. EngA (Der) GTPase family. In terms of assembly, associates with the 50S ribosomal subunit.

Its function is as follows. GTPase that plays an essential role in the late steps of ribosome biogenesis. The polypeptide is GTPase Der (Glaesserella parasuis serovar 5 (strain SH0165) (Haemophilus parasuis)).